Reading from the N-terminus, the 287-residue chain is Transcription cofactor vestigial-like protein 4 (287 aa).

Disordered regions lie at residues 44–68 and 251–287; these read ASALSSHRTGPPPISPSKRKFSMEP and AAKDSASSSPESASRRGQPASPTAHMVSHSHSPSVVS. 2 positions are modified to phosphoserine: Ser-58 and Ser-271. Residues 275–287 are compositionally biased toward low complexity; it reads HMVSHSHSPSVVS.

This sequence belongs to the vestigial family. Interacts with TEFs. Interacts with IRF2BP2.

It localises to the nucleus. May act as a specific coactivator for the mammalian TEFs. In Mus musculus (Mouse), this protein is Transcription cofactor vestigial-like protein 4 (Vgll4).